The chain runs to 119 residues: Large ribosomal subunit protein uL24 (119 aa).

The protein belongs to the universal ribosomal protein uL24 family. As to quaternary structure, part of the 50S ribosomal subunit.

One of two assembly initiator proteins, it binds directly to the 5'-end of the 23S rRNA, where it nucleates assembly of the 50S subunit. Functionally, located at the polypeptide exit tunnel on the outside of the subunit. The polypeptide is Large ribosomal subunit protein uL24 (Methanosarcina acetivorans (strain ATCC 35395 / DSM 2834 / JCM 12185 / C2A)).